Consider the following 343-residue polypeptide: D-alanine--D-alanine ligase (343 aa).

Residues 132-337 (KNLFSYHKIP…YPDLIDKLIE (206 aa)) form the ATP-grasp domain. An ATP-binding site is contributed by 165-220 (DRFLGWPCFVKPANMGSSIGVSKVHSPGEVKKALEKGFYYDRKLIFEEFVEGREIE). The Mg(2+) site is built by Asp291, Glu304, and Asn306.

It belongs to the D-alanine--D-alanine ligase family. It depends on Mg(2+) as a cofactor. Mn(2+) is required as a cofactor.

It is found in the cytoplasm. It catalyses the reaction 2 D-alanine + ATP = D-alanyl-D-alanine + ADP + phosphate + H(+). Its pathway is cell wall biogenesis; peptidoglycan biosynthesis. Its function is as follows. Cell wall formation. The sequence is that of D-alanine--D-alanine ligase from Halothermothrix orenii (strain H 168 / OCM 544 / DSM 9562).